A 446-amino-acid polypeptide reads, in one-letter code: Divalent metal cation transporter MntH (446 aa).

Transmembrane regions (helical) follow at residues 32 to 52 (LAFL…GNWI), 59 to 79 (AQFG…AMLL), 107 to 127 (AIIF…AEVI), 139 to 159 (IPLI…LFIM), 168 to 188 (AIVG…VYIS), 205 to 225 (IIAN…TIMP), 264 to 284 (SIAF…FYGV), 303 to 323 (PVLG…ALLA), 355 to 375 (LVTR…FRGN), 381 to 401 (QLLV…LIPL), and 420 to 440 (VNIC…YLII).

Belongs to the NRAMP family.

Its subcellular location is the cell membrane. Functionally, h(+)-stimulated, divalent metal cation uptake system. The polypeptide is Divalent metal cation transporter MntH (Staphylococcus haemolyticus (strain JCSC1435)).